A 601-amino-acid chain; its full sequence is MTASPKNEMWTVFKRLMGYLKPMKGMFLLSVVGLIVYGLVDAAFISFIGPFIDKGFSSSAPAISNGIALPTSQGFHADNQVLLMAPIVVILMFSLRGFANFVSTYGISYMSARLIMDMRQQVFEHYLSLPVSYMDKENTGNLISKVTFDTEQIARASGSALISIVRDSVTIIGMLGLMFYNSWKLSLCILVIGPIMGVVITIVSRRFRKVSKQIQTAMGDVSAATEQMIKGHKNVLAFGGQETETARFAKINDRNRHQNMKLAVAQAVSQPLIMVIGSFALAFVLYAASLDSMKADLTAGTFATILGAMMAMLQPIKNLTRVNAEFQRGIAACTTVFELLDTVPESDTGTYTVARAKGNLRFDNVSFSYEGQERRALEKIDFEVSQGQTLALVGRSGSGKSTIASLVTRFYTGLESGDILLDDVSIYDYSLKSLRSQVALVSQQVTLFNDTIANNIAYAYPGEVTREQIIEAATLAHAMEFIEQLPDGLDTQVGENGVLLSGGQRQRIAIARAMLRDAPVLILDEATSALDTESEKAIQQGLDNLRQNRTSVVIAHRLSTIESADQILVVDQGRIVERGTHKSLLELGGMYAKLYQMQFGS.

The 301-residue stretch at 28–328 (LLSVVGLIVY…LTRVNAEFQR (301 aa)) folds into the ABC transmembrane type-1 domain. Transmembrane regions (helical) follow at residues 32–52 (VGLI…GPFI), 81–101 (VLLM…FANF), 160–180 (ALIS…LMFY), 183–203 (WKLS…ITIV), 267–287 (AVSQ…VLYA), and 296–316 (DLTA…LQPI). The ABC transporter domain maps to 360-597 (LRFDNVSFSY…GGMYAKLYQM (238 aa)). 394-401 (GRSGSGKS) is a binding site for ATP.

It belongs to the ABC transporter superfamily. Lipid exporter (TC 3.A.1.106) family. As to quaternary structure, homodimer.

The protein localises to the cell inner membrane. It catalyses the reaction ATP + H2O + lipid A-core oligosaccharideSide 1 = ADP + phosphate + lipid A-core oligosaccharideSide 2.. Functionally, involved in lipopolysaccharide (LPS) biosynthesis. Translocates lipid A-core from the inner to the outer leaflet of the inner membrane. Transmembrane domains (TMD) form a pore in the inner membrane and the ATP-binding domain (NBD) is responsible for energy generation. The protein is ATP-dependent lipid A-core flippase of Shewanella oneidensis (strain ATCC 700550 / JCM 31522 / CIP 106686 / LMG 19005 / NCIMB 14063 / MR-1).